Consider the following 166-residue polypeptide: Protein-export protein SecB (166 aa).

The protein belongs to the SecB family. Homotetramer, a dimer of dimers. One homotetramer interacts with 1 SecA dimer.

It localises to the cytoplasm. Its function is as follows. One of the proteins required for the normal export of preproteins out of the cell cytoplasm. It is a molecular chaperone that binds to a subset of precursor proteins, maintaining them in a translocation-competent state. It also specifically binds to its receptor SecA. The sequence is that of Protein-export protein SecB from Sinorhizobium fredii (strain NBRC 101917 / NGR234).